A 275-amino-acid polypeptide reads, in one-letter code: Caspase-3 (275 aa).

Met1 bears the N-acetylmethionine mark. Propeptides lie at residues 1 to 9 (MENTENSVD) and 10 to 28 (SKSI…KSMD). The residue at position 11 (Lys11) is an N6-acetyllysine. A Phosphoserine modification is found at Ser26. Residues His121 and Cys163 contribute to the active site. Residue Cys163 is modified to S-nitrosocysteine; in inhibited form.

This sequence belongs to the peptidase C14A family. As to quaternary structure, heterotetramer that consists of two anti-parallel arranged heterodimers, each one formed by a 17 kDa (p17) and a 12 kDa (p12) subunit. Interacts with BIRC6/bruce. Post-translationally, cleavage by granzyme B, caspase-6, caspase-8 and caspase-10 generates the two active subunits. Additional processing of the propeptides is likely due to the autocatalytic activity of the activated protease. Active heterodimers between the small subunit of caspase-7 protease and the large subunit of caspase-3 also occur and vice versa. S-nitrosylated on its catalytic site cysteine in unstimulated cell lines and denitrosylated upon activation of the Fas apoptotic pathway, associated with an increase in intracellular caspase activity. Fas therefore activates caspase-3 not only by inducing the cleavage of the caspase zymogen to its active subunits, but also by stimulating the denitrosylation of its active site thiol. In terms of processing, ubiquitinated by BIRC6; this activity is inhibited by DIABLO/SMAC.

The protein resides in the cytoplasm. The enzyme catalyses Strict requirement for an Asp residue at positions P1 and P4. It has a preferred cleavage sequence of Asp-Xaa-Xaa-Asp-|- with a hydrophobic amino-acid residue at P2 and a hydrophilic amino-acid residue at P3, although Val or Ala are also accepted at this position.. Inhibited by BIRC6; following inhibition of BIRC6-caspase binding by DIABLO/SMAC, BIRC6 is subjected to caspase cleavage, leading to an increase in active caspases. In terms of biological role, involved in the activation cascade of caspases responsible for apoptosis execution. At the onset of apoptosis, it proteolytically cleaves poly(ADP-ribose) polymerase PARP1 at a '216-Asp-|-Gly-217' bond. Cleaves and activates sterol regulatory element binding proteins (SREBPs) between the basic helix-loop-helix leucine zipper domain and the membrane attachment domain. Cleaves and activates caspase-6, -7 and -9 (CASP6, CASP7 and CASP9, respectively). Cleaves and inactivates interleukin-18 (IL18). Triggers cell adhesion in sympathetic neurons through RET cleavage. Cleaves IL-1 beta between an Asp and an Ala, releasing the mature cytokine which is involved in a variety of inflammatory processes. Cleaves and inhibits serine/threonine-protein kinase AKT1 in response to oxidative stress. Acts as an inhibitor of type I interferon production during virus-induced apoptosis by mediating cleavage of antiviral proteins CGAS, IRF3 and MAVS, thereby preventing cytokine overproduction. Also involved in pyroptosis by mediating cleavage and activation of gasdermin-E (GSDME). Cleaves XRCC4 and phospholipid scramblase proteins XKR4, XKR8 and XKR9, leading to promote phosphatidylserine exposure on apoptotic cell surface. Cleaves BIRC6 following inhibition of BIRC6-caspase binding by DIABLO/SMAC. This chain is Caspase-3 (CASP3), found in Bos taurus (Bovine).